A 78-amino-acid polypeptide reads, in one-letter code: Acyl carrier protein AcpP (78 aa).

In terms of domain architecture, Carrier spans 2–77 (SDIAERVKKI…DAVKFIEKAQ (76 aa)). Ser-37 is modified (O-(pantetheine 4'-phosphoryl)serine).

It belongs to the acyl carrier protein (ACP) family. In terms of processing, 4'-phosphopantetheine is transferred from CoA to a specific serine of apo-ACP by AcpS. This modification is essential for activity because fatty acids are bound in thioester linkage to the sulfhydryl of the prosthetic group.

The protein localises to the cytoplasm. Its pathway is lipid metabolism; fatty acid biosynthesis. In terms of biological role, carrier of the growing fatty acid chain in fatty acid biosynthesis. The chain is Acyl carrier protein AcpP from Agrobacterium fabrum (strain C58 / ATCC 33970) (Agrobacterium tumefaciens (strain C58)).